The sequence spans 147 residues: Deoxyuridine 5'-triphosphate nucleotidohydrolase (147 aa).

Residues 67 to 69 (RSG), asparagine 80, and 84 to 86 (TID) contribute to the substrate site.

This sequence belongs to the dUTPase family. The cofactor is Mg(2+).

The enzyme catalyses dUTP + H2O = dUMP + diphosphate + H(+). Its pathway is pyrimidine metabolism; dUMP biosynthesis; dUMP from dCTP (dUTP route): step 2/2. Functionally, this enzyme is involved in nucleotide metabolism: it produces dUMP, the immediate precursor of thymidine nucleotides and it decreases the intracellular concentration of dUTP so that uracil cannot be incorporated into DNA. This Anaeromyxobacter sp. (strain Fw109-5) protein is Deoxyuridine 5'-triphosphate nucleotidohydrolase.